Here is a 76-residue protein sequence, read N- to C-terminus: Acyl carrier protein (76 aa).

The Carrier domain occupies 1-76 (MATFDDVKDV…AAIDYIESKQ (76 aa)). Ser36 is subject to O-(pantetheine 4'-phosphoryl)serine.

It belongs to the acyl carrier protein (ACP) family. In terms of processing, 4'-phosphopantetheine is transferred from CoA to a specific serine of apo-ACP by AcpS. This modification is essential for activity because fatty acids are bound in thioester linkage to the sulfhydryl of the prosthetic group.

Its subcellular location is the cytoplasm. Its pathway is lipid metabolism; fatty acid biosynthesis. Functionally, carrier of the growing fatty acid chain in fatty acid biosynthesis. The polypeptide is Acyl carrier protein (Deinococcus deserti (strain DSM 17065 / CIP 109153 / LMG 22923 / VCD115)).